Here is a 503-residue protein sequence, read N- to C-terminus: Glutamate--tRNA ligase (503 aa).

The short motif at 12-22 is the 'HIGH' region element; it reads PSPTGYLHVGG. The 'KMSKS' region signature appears at 259-263; the sequence is KLSKR. Lys-262 serves as a coordination point for ATP.

This sequence belongs to the class-I aminoacyl-tRNA synthetase family. Glutamate--tRNA ligase type 1 subfamily. Monomer.

The protein localises to the cytoplasm. The catalysed reaction is tRNA(Glu) + L-glutamate + ATP = L-glutamyl-tRNA(Glu) + AMP + diphosphate. Its function is as follows. Catalyzes the attachment of glutamate to tRNA(Glu) in a two-step reaction: glutamate is first activated by ATP to form Glu-AMP and then transferred to the acceptor end of tRNA(Glu). This Chlorobaculum parvum (strain DSM 263 / NCIMB 8327) (Chlorobium vibrioforme subsp. thiosulfatophilum) protein is Glutamate--tRNA ligase.